A 400-amino-acid chain; its full sequence is Tryptophan--tRNA ligase, cytoplasmic (400 aa).

The short motif at 95 to 104 is the 'HIGH' region element; it reads PSSGSLHFGH. The short motif at 281–285 is the 'KMSKS' region element; the sequence is KMSAS.

It belongs to the class-I aminoacyl-tRNA synthetase family.

The protein resides in the cytoplasm. The catalysed reaction is tRNA(Trp) + L-tryptophan + ATP = L-tryptophyl-tRNA(Trp) + AMP + diphosphate + H(+). In Dictyostelium discoideum (Social amoeba), this protein is Tryptophan--tRNA ligase, cytoplasmic (trpS).